The sequence spans 385 residues: Galactokinase (385 aa).

Residue 34–37 (EHTD) coordinates substrate. 124–130 (SSGLSSS) is a binding site for ATP. Residues serine 130 and glutamate 162 each contribute to the Mg(2+) site. The active-site Proton acceptor is the aspartate 174. Residue tyrosine 223 participates in substrate binding.

This sequence belongs to the GHMP kinase family. GalK subfamily.

The protein localises to the cytoplasm. It catalyses the reaction alpha-D-galactose + ATP = alpha-D-galactose 1-phosphate + ADP + H(+). Its pathway is carbohydrate metabolism; galactose metabolism. Its function is as follows. Catalyzes the transfer of the gamma-phosphate of ATP to D-galactose to form alpha-D-galactose-1-phosphate (Gal-1-P). This chain is Galactokinase, found in Mannheimia succiniciproducens (strain KCTC 0769BP / MBEL55E).